Here is a 433-residue protein sequence, read N- to C-terminus: L-lysine 2,3-aminomutase (433 aa).

One can recognise a Radical SAM core domain in the interval 122–334 (HRYPDRVLFY…SLIGHTTGFA (213 aa)). [4Fe-4S] cluster-binding residues include C136, C140, and C143. C279 serves as a coordination point for Zn(2+). Residue K348 is modified to N6-(pyridoxal phosphate)lysine. Residues C389, C392, and C396 each contribute to the Zn(2+) site.

Belongs to the radical SAM superfamily. KamA family. [4Fe-4S] cluster is required as a cofactor. Requires pyridoxal 5'-phosphate as cofactor. It depends on Zn(2+) as a cofactor.

It catalyses the reaction L-lysine = (3S)-3,6-diaminohexanoate. In terms of biological role, catalyzes the interconversion of L-alpha-lysine and L-beta-lysine. Is involved in the biosynthesis pathway of N6-acetyl-beta-lysine, a compatible solute produced by methanogenic archaea that helps cells to cope with salt stress. The protein is L-lysine 2,3-aminomutase (ablA) of Methanococcus maripaludis (strain DSM 14266 / JCM 13030 / NBRC 101832 / S2 / LL).